Reading from the N-terminus, the 76-residue chain is ADVPGNYPLDTRGYSYYCTKLGENEFCKKICKIHGVSYGYCYNSYCWCEYLEGKDINIWDAVKNHCTNTNLYPNGK.

The region spanning 4-67 is the LCN-type CS-alpha/beta domain; it reads PGNYPLDTRG…IWDAVKNHCT (64 aa). Cystine bridges form between cysteine 18/cysteine 41, cysteine 27/cysteine 46, and cysteine 31/cysteine 48.

It belongs to the long (3 C-C) scorpion toxin superfamily. Sodium channel inhibitor family. Beta subfamily. Expressed by the venom gland.

The protein localises to the secreted. Functionally, binds to sodium channels (Nav) and affects the channel activation process. This chain is Toxin Acra III-1, found in Androctonus crassicauda (Arabian fat-tailed scorpion).